The following is a 492-amino-acid chain: Cytochrome P450 26A1 (492 aa).

Cysteine 438 lines the heme pocket.

Belongs to the cytochrome P450 family. Requires heme as cofactor.

It is found in the endoplasmic reticulum membrane. It localises to the microsome membrane. It carries out the reaction all-trans-retinoate + reduced [NADPH--hemoprotein reductase] + O2 = all-trans-(4S)-hydroxyretinoate + oxidized [NADPH--hemoprotein reductase] + H2O + H(+). Its function is as follows. A cytochrome P450 monooxygenase involved in the metabolism of all-trans retinoic acid (atRA), a signaling molecule that binds to retinoic acid receptors and regulates gene transcription. Mechanistically, uses molecular oxygen inserting one oxygen atom into a substrate, and reducing the second into a water molecule, with two electrons provided by NADPH via cytochrome P450 reductase (CPR; NADPH-ferrihemoprotein reductase). Catalyzes the hydroxylation of carbon hydrogen bonds of atRA primarily at C-4. Has no activity toward 9-cis and 13-cis retinoic acid stereoisomers. May play a role in the oxidative metabolism of xenobiotics such as tazarotenic acid. The protein is Cytochrome P450 26A1 (cyp26a1) of Danio rerio (Zebrafish).